An 874-amino-acid chain; its full sequence is Pyruvate, phosphate dikinase (874 aa).

Residues 2 to 340 (AKWVYKFEEG…LYFLQTRNGK (339 aa)) are N-terminal. R92 serves as a coordination point for ATP. The interval 340–399 (KRTAPAALQIACDLVDEGMITEEEAVVRIEAKSLDQLLHPTFNPAALKAGEVIGSALPAS) is linker 1. The segment at 400-498 (PGAAAGKVYF…TFAEGDYISL (99 aa)) is central. Phosphothreonine; by PDRP1 is present on T453. The Tele-phosphohistidine intermediate role is filled by H455. Residues 499–533 (DGSTGKIYKGDIETQEASVSGSFERIMVWADKFRT) form a linker 2 region. Positions 534-874 (LKVRTNADTP…AAAQAALNNK (341 aa)) are C-terminal. The substrate site is built by R561, R617, E745, G766, T767, N768, and D769. A Mg(2+)-binding site is contributed by E745. Position 769 (D769) interacts with Mg(2+). C831 functions as the Proton donor in the catalytic mechanism.

It belongs to the PEP-utilizing enzyme family. Homodimer. Mg(2+) serves as cofactor. In terms of processing, phosphorylation of Thr-453 in the dark inactivates the enzyme. Dephosphorylation upon light stimulation reactivates the enzyme.

It carries out the reaction pyruvate + phosphate + ATP = phosphoenolpyruvate + AMP + diphosphate + H(+). Activated by light-induced dephosphorylation. Inhibited by dark-induced phosphorylation. Both reactions are catalyzed by PDRP1. Functionally, catalyzes the reversible phosphorylation of pyruvate and phosphate. In E.histolytica and C.symbiosus, PPDK functions in the direction of ATP synthesis. The protein is Pyruvate, phosphate dikinase (ppdK) of Clostridium symbiosum (Bacteroides symbiosus).